A 99-amino-acid polypeptide reads, in one-letter code: Small ribosomal subunit protein bS20 (99 aa).

Basic residues predominate over residues 1–20 (MASAKPKKKNPRLASGRKRA). Positions 1–29 (MASAKPKKKNPRLASGRKRARQDVKLNAA) are disordered.

Belongs to the bacterial ribosomal protein bS20 family.

In terms of biological role, binds directly to 16S ribosomal RNA. This chain is Small ribosomal subunit protein bS20, found in Paracidovorax citrulli (strain AAC00-1) (Acidovorax citrulli).